Reading from the N-terminus, the 438-residue chain is Transposon Ty2-GR1 Gag polyprotein (438 aa).

Polar residues-rich tracts occupy residues 1 to 11 (MESQQLHQNPH), 19 to 39 (ASVT…SASN), and 49 to 60 (KVNSQQETTPGT). 3 disordered regions span residues 1–86 (MESQ…GQYQ), 360–403 (HSEY…ATSS), and 418–438 (VSSQ…TERI). The tract at residues 295-397 (ENNINVSDRL…SSKPRAAKAH (103 aa)) is RNA-binding. The span at 369–381 (TSPNTTNTKVTTR) shows a compositional bias: low complexity.

As to quaternary structure, homotrimer.

The protein localises to the cytoplasm. Functionally, capsid protein (CA) is the structural component of the virus-like particle (VLP), forming the shell that encapsulates the retrotransposons dimeric RNA genome. The particles are assembled from trimer-clustered units and there are holes in the capsid shells that allow for the diffusion of macromolecules. CA also has nucleocapsid-like chaperone activity, promoting primer tRNA(i)-Met annealing to the multipartite primer-binding site (PBS), dimerization of Ty2 RNA and initiation of reverse transcription. The polypeptide is Transposon Ty2-GR1 Gag polyprotein (TY2A-GR1) (Saccharomyces cerevisiae (strain ATCC 204508 / S288c) (Baker's yeast)).